We begin with the raw amino-acid sequence, 186 residues long: GTP cyclohydrolase 1 2 (186 aa).

The protein belongs to the GTP cyclohydrolase I family. In terms of assembly, homomer.

The enzyme catalyses GTP + H2O = 7,8-dihydroneopterin 3'-triphosphate + formate + H(+). It functions in the pathway cofactor biosynthesis; 7,8-dihydroneopterin triphosphate biosynthesis; 7,8-dihydroneopterin triphosphate from GTP: step 1/1. The protein is GTP cyclohydrolase 1 2 of Pseudomonas putida (strain ATCC 47054 / DSM 6125 / CFBP 8728 / NCIMB 11950 / KT2440).